Consider the following 661-residue polypeptide: ATP-dependent RNA helicase vasa (661 aa).

Residues 1–10 show a composition bias toward acidic residues; it reads MSDDWDDEPI. Residues 1–186 are disordered; it reads MSDDWDDEPI…RRRRNEDDIN (186 aa). Ser-22 bears the Phosphoserine mark. The residue at position 27 (Thr-27) is a Phosphothreonine. Composition is skewed to gly residues over residues 38–52 and 60–83; these read DGVG…GYQG and RIGG…GGFH. Residues 85-95 show a composition bias toward basic and acidic residues; it reads GRREGERDFRG. 5 repeat units span residues 93–99, 100–106, 107–113, 114–120, and 121–127. Residues 93–127 are 5 X 7 AA tandem repeats of [FS]-R-G-G-[EQ]-G-G; the sequence is FRGGEGGFRGGQGGSRGGQGGSRGGQGGFRGGEGG. Positions 96 to 129 are enriched in gly residues; sequence GEGGFRGGQGGSRGGQGGSRGGQGGFRGGEGGFR. Residues 131–172 show a composition bias toward basic and acidic residues; the sequence is RLYENEDGDERRGRLDREERGGERRGRLDREERGGERGERGD. The short motif at 184–188 is the B30.2/SPRY domain-binding motif element; it reads DINNN. The tract at residues 184-203 is required for posterior localization in oocyte; that stretch reads DINNNNNIVEDVERKREFYI. Residues 245 to 273 carry the Q motif motif; the sequence is QHFTSADLRDIIIDNVNKSGYKIPTPIQK. Residues 276 to 453 form the Helicase ATP-binding domain; the sequence is IPVISSGRDL…GEFLKNYVFV (178 aa). 289–296 contributes to the ATP binding site; sequence AQTGSGKT. Residues 399-402 carry the DEAD box motif; sequence DEAD. Residues 477–624 enclose the Helicase C-terminal domain; sequence KRSKLIEILS…TVPDFLRTCG (148 aa).

This sequence belongs to the DEAD box helicase family. DDX4/VASA subfamily. Interacts with eIF5B and faf. Interacts with gus (via B30.2/SPRY domain) and Fsn (via B30.2/SPRY domain). Interacts with aub, me31B, eIF-4a and TER94. Interacts with piwi; this interaction is RNA independent. Interacts with Dcr-1 and Fmr1; these interactions occur in the polar granules. It depends on Mg(2+) as a cofactor. Post-translationally, ubiquitinated during oogenesis. Deubiquitinated by faf, which protects this protein from proteasome-mediated degradation. In terms of tissue distribution, abundantly expressed in the female germline. Gus and faf are required for vas expression in the posterior pole of the oocyte.

It is found in the cytoplasm. The protein localises to the perinuclear region. It localises to the cytoplasmic ribonucleoprotein granule. The enzyme catalyses ATP + H2O = ADP + phosphate + H(+). Involved in translational control mechanisms operating in early stages of oogenesis. Required maternally in many stages of oogenesis, including cystocyte differentiation, oocyte differentiation, and specification of anterior-posterior polarity in the developing cysts. Essential for the formation and/or structural integrity of perinuclear nuage particles during germ cell formation. Required for gus, Fsn and aub accumulation at the posterior pole of the embryo. Required for the localization of vas to the perinuclear region of nurse cells. May have a role in production of piwi-interacting RNA (piRNA). This is ATP-dependent RNA helicase vasa from Drosophila melanogaster (Fruit fly).